The primary structure comprises 190 residues: Anthranilate synthase component II (190 aa).

The region spanning 1 to 190 (MILIIDNYDS…ENFCTGIAKA (190 aa)) is the Glutamine amidotransferase type-1 domain. Position 51–53 (51–53 (GPG)) interacts with L-glutamine. The Nucleophile; for GATase activity role is filled by Cys-76. Residues Gln-80 and 126-127 (SL) each bind L-glutamine. Catalysis depends on residues His-167 and Glu-169.

In terms of assembly, tetramer of two components I and two components II.

The enzyme catalyses chorismate + L-glutamine = anthranilate + pyruvate + L-glutamate + H(+). It participates in amino-acid biosynthesis; L-tryptophan biosynthesis; L-tryptophan from chorismate: step 1/5. This chain is Anthranilate synthase component II (trpG2), found in Haloarcula marismortui (strain ATCC 43049 / DSM 3752 / JCM 8966 / VKM B-1809) (Halobacterium marismortui).